The primary structure comprises 530 residues: Glucose-6-phosphate isomerase (530 aa).

Catalysis depends on glutamate 347, which acts as the Proton donor. Residues histidine 378 and lysine 493 contribute to the active site.

Belongs to the GPI family.

The protein resides in the cytoplasm. It carries out the reaction alpha-D-glucose 6-phosphate = beta-D-fructose 6-phosphate. It participates in carbohydrate biosynthesis; gluconeogenesis. It functions in the pathway carbohydrate degradation; glycolysis; D-glyceraldehyde 3-phosphate and glycerone phosphate from D-glucose: step 2/4. In terms of biological role, catalyzes the reversible isomerization of glucose-6-phosphate to fructose-6-phosphate. The chain is Glucose-6-phosphate isomerase from Chlamydia abortus (strain DSM 27085 / S26/3) (Chlamydophila abortus).